The chain runs to 383 residues: MTAPADLSPTLQLACDLIRRPSVTPVDADCQTVMMQRLGDAGFKLEPMRIEDVDNFWATHGTREGPVLCFAGHTDVVPTGPVQDWQNDPFDALIDEHGMLCGRGAADMKGSLAAMLVAAERFVADHPDHKGSVAFLITSDEEGPAHHGTKAVVERLAARNERLDWCIVGEPSSTTLVGDVVKNGRRGSLGAKLTVRGKQGHVAYPHLAKNPIHLATPALAELAAEHWDNGNDFFPPTSFQISNLNSGTGATNVIPGDLVAVFNFRFSTESTVEGLQQRVAAILDKHELDWHVDWALSGLPFLTEPGALLDAVSSSIKSVTGRDTKASTSGGTSDGRFIATLGTQVVELGPVNATIHQVNERILASDLDVLTEIYYQTLVKLLA.

Zn(2+) is bound at residue H73. D75 is an active-site residue. Residue D107 participates in Zn(2+) binding. The Proton acceptor role is filled by E141. The Zn(2+) site is built by E142, E170, and H356.

The protein belongs to the peptidase M20A family. DapE subfamily. In terms of assembly, homodimer. It depends on Zn(2+) as a cofactor. Requires Co(2+) as cofactor.

The enzyme catalyses N-succinyl-(2S,6S)-2,6-diaminopimelate + H2O = (2S,6S)-2,6-diaminopimelate + succinate. It participates in amino-acid biosynthesis; L-lysine biosynthesis via DAP pathway; LL-2,6-diaminopimelate from (S)-tetrahydrodipicolinate (succinylase route): step 3/3. Its function is as follows. Catalyzes the hydrolysis of N-succinyl-L,L-diaminopimelic acid (SDAP), forming succinate and LL-2,6-diaminopimelate (DAP), an intermediate involved in the bacterial biosynthesis of lysine and meso-diaminopimelic acid, an essential component of bacterial cell walls. This is Succinyl-diaminopimelate desuccinylase from Pseudomonas syringae pv. tomato (strain ATCC BAA-871 / DC3000).